Here is a 401-residue protein sequence, read N- to C-terminus: Odorant receptor 88a (401 aa).

The Cytoplasmic segment spans residues 1–26; it reads MKPTEIKKPYRMEEFLRPQMFQEVAQ. A helical membrane pass occupies residues 27-47; sequence MVHFQWRRNPVDNSMVNASMV. Over 48-52 the chain is Extracellular; sequence PFCLS. A helical transmembrane segment spans residues 53-73; sequence AFLNVLFFGCNGWDIIGHFWL. At 74 to 142 the chain is on the cytoplasmic side; that stretch reads GHPANQNPPV…NFWQRYRFIR (69 aa). The chain crosses the membrane as a helical span at residues 143–163; the sequence is IYSHLGGPMFCVVPLALFLLT. Over 164 to 191 the chain is Extracellular; it reads HEGKDTPVAQHEQLLGGWLPCGVRKDPN. The helical transmembrane segment at 192–212 threads the bilayer; sequence FYLLVWSFDLMCTTCGVSFFV. The Cytoplasmic portion of the chain corresponds to 213 to 277; the sequence is TFDNLFNVMQ…LCRKYNDIFK (65 aa). Residues 278–298 traverse the membrane as a helical segment; sequence VAFLVSNFVGAGSLCFYLFML. Topologically, residues 299–303 are extracellular; it reads SETSD. The helical transmembrane segment at 304-324 threads the bilayer; that stretch reads VLIIAQYILPTLVLVGFTFEI. Residues 325-370 lie on the Cytoplasmic side of the membrane; it reads CLRGTQLEKASEGLESSLRSQEWYLGSRRYRKFYLLWTQYCQRTQQ. A helical transmembrane segment spans residues 371-391; it reads LGAFGLIQVNMVHFTEIMQLA. The Extracellular segment spans residues 392–401; it reads YRLFTFLKSH.

The protein belongs to the insect chemoreceptor superfamily. Heteromeric odorant receptor channel (TC 1.A.69) family. Or49a subfamily. Interacts with Orco. Complexes exist early in the endomembrane system in olfactory sensory neurons (OSNs), coupling these complexes to the conserved ciliary trafficking pathway. Expressed in olfactory sensory neurons in the antenna.

The protein localises to the cell membrane. Odorant receptor which mediates acceptance or avoidance behavior, depending on its substrates. The odorant receptor repertoire encodes a large collection of odor stimuli that vary widely in identity, intensity, and duration. May form a complex with Orco to form odorant-sensing units, providing sensitive and prolonged odorant signaling and calcium permeability. This is Odorant receptor 88a (Or88a) from Drosophila melanogaster (Fruit fly).